We begin with the raw amino-acid sequence, 347 residues long: NADH-ubiquinone oxidoreductase chain 2 (347 aa).

A run of 10 helical transmembrane segments spans residues 3 to 23 (PIVF…VMMS), 25 to 45 (HWLM…PILM), 59 to 79 (YFLT…INLM), 111 to 131 (FHFW…LILL), 149 to 169 (INLD…GWGG), 178 to 198 (IMAY…TYNP), 201 to 221 (TMLN…LLML), 242 to 262 (SLIL…GFIP), 274 to 294 (NSII…YFYL), and 325 to 345 (LLPT…TMSI).

Belongs to the complex I subunit 2 family. Core subunit of respiratory chain NADH dehydrogenase (Complex I) which is composed of 45 different subunits. Interacts with TMEM242.

The protein resides in the mitochondrion inner membrane. It carries out the reaction a ubiquinone + NADH + 5 H(+)(in) = a ubiquinol + NAD(+) + 4 H(+)(out). Functionally, core subunit of the mitochondrial membrane respiratory chain NADH dehydrogenase (Complex I) which catalyzes electron transfer from NADH through the respiratory chain, using ubiquinone as an electron acceptor. Essential for the catalytic activity and assembly of complex I. The sequence is that of NADH-ubiquinone oxidoreductase chain 2 from Rhinoceros unicornis (Greater Indian rhinoceros).